The chain runs to 205 residues: Large ribosomal subunit protein uL4 (205 aa).

The tract at residues Ile56–Arg78 is disordered.

Belongs to the universal ribosomal protein uL4 family. As to quaternary structure, part of the 50S ribosomal subunit.

One of the primary rRNA binding proteins, this protein initially binds near the 5'-end of the 23S rRNA. It is important during the early stages of 50S assembly. It makes multiple contacts with different domains of the 23S rRNA in the assembled 50S subunit and ribosome. Its function is as follows. Forms part of the polypeptide exit tunnel. The polypeptide is Large ribosomal subunit protein uL4 (Ehrlichia canis (strain Jake)).